Reading from the N-terminus, the 287-residue chain is Inorganic pyrophosphatase (287 aa).

R79 contacts diphosphate. Residues D116, D121, and D153 each contribute to the Mg(2+) site.

This sequence belongs to the PPase family. Mg(2+) serves as cofactor.

The protein localises to the cytoplasm. It catalyses the reaction diphosphate + H2O = 2 phosphate + H(+). This chain is Inorganic pyrophosphatase (IPP1), found in Candida glabrata (strain ATCC 2001 / BCRC 20586 / JCM 3761 / NBRC 0622 / NRRL Y-65 / CBS 138) (Yeast).